Reading from the N-terminus, the 404-residue chain is Keratin, type I microfibrillar, 47.6 kDa (404 aa).

The tract at residues 1–56 is head; sequence MSFNFCLPNLSFRSSCSSRPCVPSSCCGTTLPGACNIPASVGSCNWFCEGSFNGNE. The IF rod domain occupies 56-367; sequence EKETMQFLND…GLLDSEDCKL (312 aa). Residues 57 to 91 form a coil 1A region; sequence KETMQFLNDRLASYLEKVRQLERENAELERRILER. A linker 1 region spans residues 92–102; that stretch reads SQQQEPLVCPN. A coil 1B region spans residues 103 to 203; that stretch reads YQSYFRTIEE…HEQEVNTLRS (101 aa). Residues 204 to 219 form a linker 12 region; it reads QLGDRLNVEVDAAPTV. The segment at 220 to 363 is coil 2; it reads DLNHVLNETR…NTYRGLLDSE (144 aa). The tail stretch occupies residues 364-404; it reads DCKLPCNPCATTNTCGKPIGPCISNPCVSRTRCGPCNTFVH.

Belongs to the intermediate filament family.

Its function is as follows. Wool microfibrillar keratin. This Ovis aries (Sheep) protein is Keratin, type I microfibrillar, 47.6 kDa.